Consider the following 1502-residue polypeptide: DNA-directed RNA polymerase subunit beta' (1502 aa).

4 residues coordinate Zn(2+): Cys60, Cys62, Cys75, and Cys78. Residues 265-293 (RKQRDLEDAEQLTGAERERKEYEASQERE) form a disordered region. The segment covering 279 to 293 (AERERKEYEASQERE) has biased composition (basic and acidic residues). Asp626, Asp628, and Asp630 together coordinate Mg(2+). The Zn(2+) site is built by Cys1002, Cys1075, Cys1082, and Cys1085. The interval 1472–1502 (SDDNGDEVGKNGEFADETPFTGDSDDRDNEI) is disordered.

Belongs to the RNA polymerase beta' chain family. As to quaternary structure, the RNAP catalytic core consists of 2 alpha, 1 beta, 1 beta' and 1 omega subunit. When a sigma factor is associated with the core the holoenzyme is formed, which can initiate transcription. It depends on Mg(2+) as a cofactor. The cofactor is Zn(2+).

It catalyses the reaction RNA(n) + a ribonucleoside 5'-triphosphate = RNA(n+1) + diphosphate. In terms of biological role, DNA-dependent RNA polymerase catalyzes the transcription of DNA into RNA using the four ribonucleoside triphosphates as substrates. This chain is DNA-directed RNA polymerase subunit beta', found in Roseiflexus castenholzii (strain DSM 13941 / HLO8).